Reading from the N-terminus, the 472-residue chain is MTKHWGGPGLLAPPVITVGEGAQRDHHLDCRIGYSSSKRSCHRSSNPLLELGGRLDKSTGMAQDSCYRAKATNQGPWELQDGNSSGGKKKNYQRYPKPPYSYLAMIAMVIQNSPEKKLTLSEILKEISTLFPFFKGNYKGWRDSVRHNLSSYDCFVKVLKDPGKPQGKGNFWTVEVNRIPLELLKRQNTAVSRQDETIFAQDLAPYIFQGYSQPNKSKPLPPESSLPPVPTRQSPPPSEDPYRPKLDSTFAIDSLLHSLRPASSAGEGLRERESWGVGPPPHTRSTTPPRPCNASYNGSSSASSVSPASDFSDEDWRGVTVVGKRSGDRGITSDAYSDSCPPPNKSSKRGNTPPWELPTSYAKYTPPNAVAPPSMRFNGNPFMPLGGIPFYGYGGAHVTTSHLIGHPYWPILPSGPVSIQAPPLLMDLDSMLQSVPPNKSVFDALGSNNQTVHPSPNQYALQNGPSLCKYSL.

The tract at residues 36–56 (SSKRSCHRSSNPLLELGGRLD) is disordered. Residues 97-193 (KPPYSYLAMI…LKRQNTAVSR (97 aa)) constitute a DNA-binding region (fork-head). 2 disordered regions span residues 211 to 246 (YSQP…RPKL) and 261 to 360 (PASS…LPTS). Positions 219–239 (PLPPESSLPPVPTRQSPPPSE) are enriched in pro residues. Positions 294-310 (ASYNGSSSASSVSPASD) are enriched in low complexity. Residues 339–465 (SCPPPNKSSK…PNQYALQNGP (127 aa)) form an SMAD-interaction domain (SID) region. The Fast/FoxH1 motif 1 (FM1) signature appears at 357–361 (LPTSY). The Fast/FoxH1 motif 2 (FM2) signature appears at 367-373 (PNAVAPP). The SMAD interaction motif (SIM) motif lies at 428–448 (LDSMLQSVPPNKSVFDALGSN).

The protein localises to the nucleus. Functionally, transcriptional activator. Activates an activin response element (ARE). Recognizes and binds to the DNA sequence 5'-TGT[GT][GT]ATT-3'. Modulator of nodal signaling required for organizer formation. Also required for the development of dorsal axial structures and left-right symmetry. This Danio rerio (Zebrafish) protein is Forkhead box protein H1 (foxh1).